Consider the following 97-residue polypeptide: Lipolysis-activating peptide 1-alpha chain (97 aa).

Residues 1–21 form the signal peptide; sequence MNIMLFCSVFILVSLTGLSVS. The LCN-type CS-alpha/beta domain maps to 25-88; it reads PGNYPMSLYG…FWAAHKNHCK (64 aa). Disulfide bonds link C39-C62, C48-C67, and C52-C69.

It belongs to the long (3 C-C) scorpion toxin superfamily. Monomer (edited version) and heterodimer (non-edited version) of this alpha chain and a beta chain (AC P0CI43). In terms of tissue distribution, expressed by the venom gland.

The protein localises to the secreted. In terms of biological role, the heterodimer non-edited LVP1 induces lipolysis in rat adipocytes. Induction of lipolysis by LVP1 appears to be mediated through the beta-2 adrenergic receptor pathway (ADRB2). Its function is as follows. The edited BmKBTx-like, similar to beta-toxins, may modulate voltage-gated sodium channels (Nav) and may block voltage-gated potassium channels (Kv). The polypeptide is Lipolysis-activating peptide 1-alpha chain (Lychas mucronatus (Chinese swimming scorpion)).